Consider the following 327-residue polypeptide: Clavesin-2 (327 aa).

The region spanning 96–257 (IKQALKDGFP…EFGGMLPPYD (162 aa)) is the CRAL-TRIO domain. Residues 289–327 (DKELSPKSMKRSQSVVDPTALKRMDKSEEENMQPLLALD) are disordered.

As to quaternary structure, forms a complex with clathrin heavy chain and gamma-adaptin.

It is found in the golgi apparatus. The protein resides in the trans-Golgi network membrane. It localises to the early endosome membrane. Its subcellular location is the cytoplasmic vesicle. The protein localises to the clathrin-coated vesicle. In terms of biological role, required for normal morphology of late endosomes and/or lysosomes in neurons. Binds phosphatidylinositol 3,5-bisphosphate (PtdIns(3,5)P2). This Mus musculus (Mouse) protein is Clavesin-2 (Clvs2).